The following is a 71-amino-acid chain: uncharacterized protein (71 aa).

The disordered stretch occupies residues 52–71 (KEKFERKEDEKSKPKGVRED).

This is an uncharacterized protein from Archaeoglobus fulgidus (strain ATCC 49558 / DSM 4304 / JCM 9628 / NBRC 100126 / VC-16).